The primary structure comprises 373 residues: Alpha-1,3-mannosyl-glycoprotein 4-beta-N-acetylglucosaminyltransferase-like protein MGAT4D (373 aa).

Topologically, residues 1 to 5 (MKAKN) are cytoplasmic. A helical; Signal-anchor for type II membrane protein transmembrane segment spans residues 6–26 (VNLLFAFVAVLLFGFSCFCIS). Residues 27–373 (RMNQTNNQLI…REQHLKDNYY (347 aa)) lie on the Lumenal side of the membrane. 3 N-linked (GlcNAc...) asparagine glycosylation sites follow: Asn29, Asn54, and Asn144.

Belongs to the glycosyltransferase 54 family. In terms of assembly, isoform 2 self-associates; specifically in the endoplasmic reticulum prior to its translocation to the Golgi. Isoform 1 and isoform 2 interact with MGAT1, MGAT3 and MAN2A2; isoform 2 interacts specifically with MGAT1 in the Golgi. In terms of processing, isoform 2 is N-glycosylated; consisting of high-mannose and/or hybrid glycans. Isoform 1 and isoform 2 are specifically expressed in testis. Isoform 2 is expressed in spermatocytes but not in spermatids. Isoform 1 is expressed in spermatids.

The protein localises to the endoplasmic reticulum membrane. It is found in the endoplasmic reticulum-Golgi intermediate compartment membrane. Its subcellular location is the golgi apparatus membrane. In terms of biological role, may play a role in male spermatogenesis. In vitro acts as inhibitor of MGAT1 activity causing cell surface proteins to carry mainly high mannose N-glycans. The function is mediated by its lumenal domain and occurs specifically in the Golgi. A catalytic glucosyltransferase activity is not detected. May be involved in regulation of Sertoli-germ cell interactions during specific stages of spermatogenesis. The protein is Alpha-1,3-mannosyl-glycoprotein 4-beta-N-acetylglucosaminyltransferase-like protein MGAT4D of Mus musculus (Mouse).